We begin with the raw amino-acid sequence, 148 residues long: Antitoxin Xre (148 aa).

It belongs to the MbcA/ParS/Xre antitoxin family. As to quaternary structure, homodimer. Forms a complex with cognate toxin Rse.

In terms of biological role, antitoxin component of a type II toxin-antitoxin (TA) system. Neutralizes the activity of cognate toxin Res. The sequence is that of Antitoxin Xre from Yersinia enterocolitica serotype O:8 / biotype 1B (strain NCTC 13174 / 8081).